The primary structure comprises 162 residues: Phosphopantetheine adenylyltransferase (162 aa).

Thr10 serves as a coordination point for substrate. ATP is bound by residues 10–11 (TF) and His18. Positions 42, 74, and 88 each coordinate substrate. Residues 89–91 (GLR), Glu99, and 124–130 (FSCISST) contribute to the ATP site.

Belongs to the bacterial CoaD family. In terms of assembly, homohexamer. The cofactor is Mg(2+).

The protein resides in the cytoplasm. It carries out the reaction (R)-4'-phosphopantetheine + ATP + H(+) = 3'-dephospho-CoA + diphosphate. Its pathway is cofactor biosynthesis; coenzyme A biosynthesis; CoA from (R)-pantothenate: step 4/5. Its function is as follows. Reversibly transfers an adenylyl group from ATP to 4'-phosphopantetheine, yielding dephospho-CoA (dPCoA) and pyrophosphate. The protein is Phosphopantetheine adenylyltransferase of Francisella tularensis subsp. novicida (strain U112).